Reading from the N-terminus, the 100-residue chain is Small ribosomal subunit protein uS14 (100 aa).

This sequence belongs to the universal ribosomal protein uS14 family. In terms of assembly, part of the 30S ribosomal subunit. Contacts proteins S3 and S10.

Binds 16S rRNA, required for the assembly of 30S particles and may also be responsible for determining the conformation of the 16S rRNA at the A site. The chain is Small ribosomal subunit protein uS14 from Synechococcus sp. (strain CC9311).